The primary structure comprises 1481 residues: ABC multidrug transporter atrH (1481 aa).

The segment covering methionine 1–leucine 10 has biased composition (basic and acidic residues). 2 disordered regions span residues methionine 1–glutamine 45 and isoleucine 61–phenylalanine 89. 3 N-linked (GlcNAc...) asparagine glycosylation sites follow: asparagine 19, asparagine 76, and asparagine 320. The region spanning alanine 134–glutamate 396 is the ABC transporter 1 domain. The helical transmembrane segment at methionine 507–tyrosine 527 threads the bilayer. N-linked (GlcNAc...) asparagine glycosylation is present at asparagine 530. A run of 5 helical transmembrane segments spans residues leucine 542–tryptophan 562, leucine 587–phenylalanine 607, glycine 616–phenylalanine 636, glutamate 650–valine 670, and phenylalanine 758–leucine 778. Positions phenylalanine 838–serine 1081 constitute an ABC transporter 2 domain. Residue glycine 874–threonine 881 coordinates ATP. The next 6 helical transmembrane spans lie at tyrosine 1174–tryptophan 1194, isoleucine 1210–methionine 1230, alanine 1249–alanine 1269, leucine 1298–isoleucine 1318, isoleucine 1327–valine 1347, and alanine 1358–valine 1378. Residue asparagine 1395 is glycosylated (N-linked (GlcNAc...) asparagine). The chain crosses the membrane as a helical span at residues valine 1446–leucine 1466.

This sequence belongs to the ABC transporter superfamily. ABCG family. PDR (TC 3.A.1.205) subfamily.

It localises to the cell membrane. In terms of biological role, pleiotropic ABC efflux transporter involved in the basal level of azole susceptibility. The sequence is that of ABC multidrug transporter atrH from Aspergillus oryzae (strain ATCC 42149 / RIB 40) (Yellow koji mold).